The sequence spans 204 residues: Ribosomal RNA small subunit methyltransferase J (204 aa).

Residues 55–56 (RD), 71–72 (ER), and D123 each bind S-adenosyl-L-methionine.

Belongs to the methyltransferase superfamily. RsmJ family.

It localises to the cytoplasm. The catalysed reaction is guanosine(1516) in 16S rRNA + S-adenosyl-L-methionine = N(2)-methylguanosine(1516) in 16S rRNA + S-adenosyl-L-homocysteine + H(+). Functionally, specifically methylates the guanosine in position 1516 of 16S rRNA. This is Ribosomal RNA small subunit methyltransferase J from Rhodopseudomonas palustris (strain TIE-1).